A 182-amino-acid polypeptide reads, in one-letter code: ATP-dependent protease subunit HslV (182 aa).

T7 is a catalytic residue. The Na(+) site is built by A166, C169, and T172.

It belongs to the peptidase T1B family. HslV subfamily. In terms of assembly, a double ring-shaped homohexamer of HslV is capped on each side by a ring-shaped HslU homohexamer. The assembly of the HslU/HslV complex is dependent on binding of ATP.

The protein localises to the cytoplasm. It carries out the reaction ATP-dependent cleavage of peptide bonds with broad specificity.. Allosterically activated by HslU binding. Its function is as follows. Protease subunit of a proteasome-like degradation complex believed to be a general protein degrading machinery. The protein is ATP-dependent protease subunit HslV of Albidiferax ferrireducens (strain ATCC BAA-621 / DSM 15236 / T118) (Rhodoferax ferrireducens).